The sequence spans 140 residues: Protein NrdI (140 aa).

This sequence belongs to the NrdI family.

Probably involved in ribonucleotide reductase function. This chain is Protein NrdI, found in Ruegeria sp. (strain TM1040) (Silicibacter sp.).